An 89-amino-acid polypeptide reads, in one-letter code: Small ribosomal subunit protein bS18 (89 aa).

This sequence belongs to the bacterial ribosomal protein bS18 family. In terms of assembly, part of the 30S ribosomal subunit. Forms a tight heterodimer with protein bS6.

In terms of biological role, binds as a heterodimer with protein bS6 to the central domain of the 16S rRNA, where it helps stabilize the platform of the 30S subunit. This Bdellovibrio bacteriovorus (strain ATCC 15356 / DSM 50701 / NCIMB 9529 / HD100) protein is Small ribosomal subunit protein bS18.